The chain runs to 213 residues: Pyrrolidone-carboxylate peptidase (213 aa).

Active-site residues include glutamate 78, cysteine 141, and histidine 165.

Belongs to the peptidase C15 family. Homotetramer.

It is found in the cytoplasm. It carries out the reaction Release of an N-terminal pyroglutamyl group from a polypeptide, the second amino acid generally not being Pro.. Its function is as follows. Removes 5-oxoproline from various penultimate amino acid residues except L-proline. The protein is Pyrrolidone-carboxylate peptidase of Clostridium botulinum (strain Alaska E43 / Type E3).